Consider the following 466-residue polypeptide: Putative multidrug resistance protein MdtD (466 aa).

14 helical membrane passes run 11–31 (LWIV…VNTA), 48–68 (SVIV…GWLA), 71–91 (IGVK…SLLC), 105–125 (VIQG…VMKI), 137–157 (FVTL…GFLV), 164–184 (WIFL…WFLM), 194–214 (FDIS…LALD), 218–238 (SLGI…IALL), 262–282 (FSIG…LPFM), 286–306 (FLQL…VPMV), 328–347 (VLIV…ALVA), 351–370 (WIWM…AIRF), 403–423 (LGVS…MAAG), and 429–449 (MVFI…ALIF).

It belongs to the major facilitator superfamily. TCR/Tet family.

It localises to the cell inner membrane. The polypeptide is Putative multidrug resistance protein MdtD (Pectobacterium carotovorum subsp. carotovorum (strain PC1)).